A 189-amino-acid polypeptide reads, in one-letter code: Interferon alpha-H (189 aa).

The first 23 residues, methionine 1 to glycine 23, serve as a signal peptide directing secretion. Disulfide bonds link cysteine 24–cysteine 122 and cysteine 52–cysteine 162.

The protein belongs to the alpha/beta interferon family.

The protein resides in the secreted. Its function is as follows. Produced by macrophages, IFN-alpha have antiviral activities. Interferon stimulates the production of two enzymes: a protein kinase and an oligoadenylate synthetase. The chain is Interferon alpha-H (IFNAH) from Bos taurus (Bovine).